A 361-amino-acid polypeptide reads, in one-letter code: Chorismate synthase (361 aa).

R48 and R54 together coordinate NADP(+). Residues 131–133 (RSS), 243–244 (NA), G287, 302–306 (KPTSS), and R328 each bind FMN.

Belongs to the chorismate synthase family. In terms of assembly, homotetramer. FMNH2 serves as cofactor.

It carries out the reaction 5-O-(1-carboxyvinyl)-3-phosphoshikimate = chorismate + phosphate. It functions in the pathway metabolic intermediate biosynthesis; chorismate biosynthesis; chorismate from D-erythrose 4-phosphate and phosphoenolpyruvate: step 7/7. In terms of biological role, catalyzes the anti-1,4-elimination of the C-3 phosphate and the C-6 proR hydrogen from 5-enolpyruvylshikimate-3-phosphate (EPSP) to yield chorismate, which is the branch point compound that serves as the starting substrate for the three terminal pathways of aromatic amino acid biosynthesis. This reaction introduces a second double bond into the aromatic ring system. The protein is Chorismate synthase of Rhodopseudomonas palustris (strain BisB5).